We begin with the raw amino-acid sequence, 456 residues long: Shootin-1 (456 aa).

M1 is subject to N-acetylmethionine. Residues S3 and S4 each carry the phosphoserine modification. Positions 7-353 (EKQLQLITSL…RVNQSENSVP (347 aa)) form a coiled coil. Phosphoserine; by PAK1 occurs at positions 101 and 249. Disordered regions lie at residues 343–405 (KRVN…VTDL) and 418–445 (KKGVHLRPVNQTARPKTKPESSKGCESA). A compositionally biased stretch (pro residues) spans 352-369 (VPPPPPPPPPLPPPPPNP). The residue at position 375 (S375) is a Phosphoserine.

Belongs to the shootin family. In terms of assembly, interacts with L1CAM; this interaction occurs in axonal growth cones. Interacts with actin filament retrograde flow; this interaction is enhanced in a netrin-1- and PAK1-dependent manner and promotes F-actin-substrate coupling and concomitant formation of traction forces at axonal growth cones. Interacts with RUFY3. Interacts with PFN2. Interacts (via N-terminus) with KIF20B; this interaction is direct and promotes the association of SHTN1 to microtubules in primary neurons. Associates with microtubule. Phosphorylated on Ser-101 and Ser-249 by PAK1 through a CDC42- and RAC1-dependent signaling pathway, which enhances its association with F-actin retrograde flow in filopodia and lamellipodia of axonal growth cones. Phosphorylation on Ser-101 and Ser-249 is increased by netrin-1.

The protein localises to the perikaryon. It is found in the cell projection. The protein resides in the axon. It localises to the growth cone. Its subcellular location is the cytoplasm. The protein localises to the cytoskeleton. It is found in the filopodium. The protein resides in the lamellipodium. Involved in the generation of internal asymmetric signals required for neuronal polarization and neurite outgrowth. Mediates netrin-1-induced F-actin-substrate coupling or 'clutch engagement' within the axon growth cone through activation of CDC42, RAC1 and PAK1-dependent signaling pathway, thereby converting the F-actin retrograde flow into traction forces, concomitantly with filopodium extension and axon outgrowth. Plays a role in cytoskeletal organization by regulating the subcellular localization of phosphoinositide 3-kinase (PI3K) activity at the axonal growth cone. Also plays a role in regenerative neurite outgrowth. In the developing cortex, cooperates with KIF20B to promote both the transition from the multipolar to the bipolar stage and the radial migration of cortical neurons from the ventricular zone toward the superficial layer of the neocortex. Involved in the accumulation of phosphatidylinositol 3,4,5-trisphosphate (PIP3) in the growth cone of primary hippocampal neurons. The chain is Shootin-1 from Pongo abelii (Sumatran orangutan).